A 600-amino-acid chain; its full sequence is Forkhead box protein O (600 aa).

Thr49 is modified (phosphothreonine; by PKB/AKT1). Phosphoserine is present on Ser80. Positions 100–206 form a DNA-binding region, fork-head; the sequence is WGNLSYADLI…ETSRYEKRRG (107 aa). Disordered stretches follow at residues 187 to 210, 222 to 283, 319 to 364, and 580 to 600; these read KSVR…RAKK, GLND…LEPD, QQGF…TPGY, and LNAR…SWVH. Ser195 is modified (phosphoserine; by PKB/AKT1). Composition is skewed to polar residues over residues 226–235 and 261–270; these read ATPSPSSSVS and RASSNASSCG. The residue at position 264 (Ser264) is a Phosphoserine; by PKB/AKT1. Phosphoserine occurs at positions 267, 268, and 273. Positions 330-342 are enriched in pro residues; sequence TQPPPPPYQPPQP. Low complexity predominate over residues 343-354; that stretch reads QQQQQQGQQPSP.

Interacts with melt.

It is found in the cytoplasm. It localises to the nucleus. Transcription factor involved in the regulation of the insulin signaling pathway. Consistently activates both the downstream target Thor\d4EBP and the feedback control target InR. Involved in negative regulation of the cell cycle, modulating cell growth and proliferation. In response to cellular stresses, such as nutrient deprivation or increased levels of reactive oxygen species, foxo is activated and inhibits growth through the action of target genes such as Thor. Foxo activated in the adult fat body can regulate lifespan in adults; an insulin peptide itself may function as one secondary messenger of insulin-regulated aging. Also regulates Lip4, homolog of human acid lipases, thereby acting as a key modulator of lipid metabolism by insulin signaling and integrates insulin responses to glucose and lipid homeostasis. The chain is Forkhead box protein O from Drosophila ananassae (Fruit fly).